Reading from the N-terminus, the 652-residue chain is Acetyl-coenzyme A synthetase (652 aa).

CoA is bound by residues 189-192 (RGGK) and Thr311. ATP is bound by residues 387-389 (GEP), 411-416 (DTWWQT), Asp500, and Arg515. CoA is bound at residue Ser523. Arg526 serves as a coordination point for ATP. Mg(2+) contacts are provided by Val537, His539, and Val542. A CoA-binding site is contributed by Arg584. Position 609 is an N6-acetyllysine (Lys609).

It belongs to the ATP-dependent AMP-binding enzyme family. Requires Mg(2+) as cofactor. In terms of processing, acetylated. Deacetylation by the SIR2-homolog deacetylase activates the enzyme.

The enzyme catalyses acetate + ATP + CoA = acetyl-CoA + AMP + diphosphate. Functionally, catalyzes the conversion of acetate into acetyl-CoA (AcCoA), an essential intermediate at the junction of anabolic and catabolic pathways. AcsA undergoes a two-step reaction. In the first half reaction, AcsA combines acetate with ATP to form acetyl-adenylate (AcAMP) intermediate. In the second half reaction, it can then transfer the acetyl group from AcAMP to the sulfhydryl group of CoA, forming the product AcCoA. The polypeptide is Acetyl-coenzyme A synthetase (Rhizobium rhizogenes (Agrobacterium rhizogenes)).